Consider the following 289-residue polypeptide: Acetyl-coenzyme A carboxylase carboxyl transferase subunit beta 2 (289 aa).

Positions 25-289 constitute a CoA carboxyltransferase N-terminal domain; sequence VWTKCPSCDQ…TNTSIRLEVK (265 aa). Residues cysteine 29, cysteine 32, cysteine 48, and cysteine 51 each coordinate Zn(2+). The C4-type zinc-finger motif lies at 29 to 51; it reads CPSCDQVLYRIALKENLEVCPKC.

The protein belongs to the AccD/PCCB family. In terms of assembly, acetyl-CoA carboxylase is a heterohexamer composed of biotin carboxyl carrier protein (AccB), biotin carboxylase (AccC) and two subunits each of ACCase subunit alpha (AccA) and ACCase subunit beta (AccD). The cofactor is Zn(2+).

The protein resides in the cytoplasm. It catalyses the reaction N(6)-carboxybiotinyl-L-lysyl-[protein] + acetyl-CoA = N(6)-biotinyl-L-lysyl-[protein] + malonyl-CoA. It functions in the pathway lipid metabolism; malonyl-CoA biosynthesis; malonyl-CoA from acetyl-CoA: step 1/1. Functionally, component of the acetyl coenzyme A carboxylase (ACC) complex. Biotin carboxylase (BC) catalyzes the carboxylation of biotin on its carrier protein (BCCP) and then the CO(2) group is transferred by the transcarboxylase to acetyl-CoA to form malonyl-CoA. This chain is Acetyl-coenzyme A carboxylase carboxyl transferase subunit beta 2, found in Vibrio parahaemolyticus serotype O3:K6 (strain RIMD 2210633).